The chain runs to 83 residues: MSGPNGDLGMPVDAGTEGENDSFGEAEYAAINSMLDQINSCLDHLEEKNDHLHARLQELLESNRQTRLEFQQQLGEAPGDASP.

The tract at residues 1-25 (MSGPNGDLGMPVDAGTEGENDSFGE) is disordered. Residues 25–74 (EAEYAAINSMLDQINSCLDHLEEKNDHLHARLQELLESNRQTRLEFQQQL) are a coiled coil. Ser-82 carries the post-translational modification Phosphoserine.

It belongs to the UPF0184 (EST00098) family.

It localises to the cell junction. The protein resides in the cytoplasm. Its subcellular location is the cytoskeleton. Essential for intermediate filament organization in intestinal cells, interacts with intermediate filament and regulates intestinal lumen morphology. This is Bublin coiled-coil protein from Mus musculus (Mouse).